A 320-amino-acid polypeptide reads, in one-letter code: Malate dehydrogenase (320 aa).

NAD(+) contacts are provided by residues G10–G15 and D34. Substrate-binding residues include R83 and R89. Residues N96 and I119–N121 each bind NAD(+). 2 residues coordinate substrate: N121 and R152. Catalysis depends on H176, which acts as the Proton acceptor.

The protein belongs to the LDH/MDH superfamily. MDH type 3 family.

The catalysed reaction is (S)-malate + NAD(+) = oxaloacetate + NADH + H(+). Its function is as follows. Catalyzes the reversible oxidation of malate to oxaloacetate. The chain is Malate dehydrogenase from Bartonella quintana (strain Toulouse) (Rochalimaea quintana).